The primary structure comprises 152 residues: uncharacterized protein (152 aa).

4 consecutive transmembrane segments (helical) span residues 2–22, 26–46, 92–112, and 128–148; these read ENLIVAISNFPAVLPIGLSFL, FITFGTITFVSIASFISHLIE, VVPIVNNKWLFAMTIPVFILL, and YIITHCMWHAGIFGLMYYFLK.

The protein localises to the membrane. This is an uncharacterized protein from Acanthamoeba polyphaga mimivirus (APMV).